A 330-amino-acid chain; its full sequence is Glucosyltransferase 3 (330 aa).

A UDP-binding site is contributed by threonine 16. Residues 106-111 (MFSGNF) are substrate protein-binding loop. Residues arginine 179, 211–214 (YRPD), and 244–249 (SYKLGS) each bind UDP.

It belongs to the Gtf3 glucosyltransferase family. Homotetramer; a dimer of dimers. Requires In vitro glycosyltransferase activity is metal-independent. as cofactor.

It participates in protein modification; protein glycosylation. Functionally, required for polymorphic O-glycosylation of the serine-rich repeat protein Fap1. Catalyzes the second step in glycosylation of the serine-rich repeat protein in this bacteria. Transfers glucose from UDP-glucose to the terminal GlcNAc moiety of 3-O-(N-acetyl-alpha-D-glucosaminyl)-L-seryl-[protein] which results from the first glycosylation step of Fap1; does not use other sugar nucleotides as substrates. This is Glucosyltransferase 3 from Streptococcus parasanguinis.